The chain runs to 244 residues: Large ribosomal subunit protein uL3 (244 aa).

The tract at residues 215 to 244 (KKPPRERRGFAGSSTVDPLKASKRAVAKKK) is disordered. Over residues 235-244 (ASKRAVAKKK) the composition is skewed to basic residues.

It belongs to the universal ribosomal protein uL3 family. In terms of assembly, part of the 50S ribosomal subunit. Forms a cluster with proteins L14 and L19.

In terms of biological role, one of the primary rRNA binding proteins, it binds directly near the 3'-end of the 23S rRNA, where it nucleates assembly of the 50S subunit. This Koribacter versatilis (strain Ellin345) protein is Large ribosomal subunit protein uL3.